The following is a 412-amino-acid chain: Elongation factor 1-gamma 2 (412 aa).

N-acetylserine is present on Ser-2. The GST N-terminal domain maps to 2 to 77 (SQGTLYINRS…YLANQVADEK (76 aa)). Residues 86–217 (DVIEKSQILR…AEKALTYTPP (132 aa)) enclose the GST C-terminal domain. A disordered region spans residues 216–253 (PPKKQKAEKPKAEKSKAEKKKDEAKPADDAAPAKKPKH). Basic and acidic residues predominate over residues 220–247 (QKAEKPKAEKSKAEKKKDEAKPADDAAP). Positions 251 to 412 (PKHPLEALGK…KEIVDGKVLK (162 aa)) constitute an EF-1-gamma C-terminal domain.

The eukaryotic elongation factor 1 complex (eEF1) is probably a heterohexamer. Two trimeric complexes, each composed of eEF1A (TEF1 or TEF2), eEF1Balpha (EFB1) and eEF1Bgamma (CAM1 or TEF4), are probably dimerized via the eF1Bgamma subunits. The eEF1B subcomplex with the GEF activity is formed of eEF1Balpha and eEF1Bgamma. TEF4 interacts with EFB1.

The protein resides in the cytoplasm. The protein operates within protein biosynthesis; polypeptide chain elongation. Its function is as follows. Subunit of the eukaryotic elongation factor 1 complex (eEF1). Probably plays a role in anchoring the complex to other cellular components. This chain is Elongation factor 1-gamma 2 (TEF4), found in Saccharomyces cerevisiae (strain ATCC 204508 / S288c) (Baker's yeast).